Consider the following 319-residue polypeptide: Tetrahydromethanopterin S-methyltransferase subunit H (319 aa).

Belongs to the MtrH family. In terms of assembly, the complex is composed of 8 subunits; MtrA, MtrB, MtrC, MtrD, MtrE, MtrF, MtrG and MtrH.

It catalyses the reaction 5-methyl-5,6,7,8-tetrahydromethanopterin + coenzyme M + 2 Na(+)(in) = 5,6,7,8-tetrahydromethanopterin + methyl-coenzyme M + 2 Na(+)(out). Its pathway is one-carbon metabolism; methanogenesis from CO(2); methyl-coenzyme M from 5,10-methylene-5,6,7,8-tetrahydromethanopterin: step 2/2. In terms of biological role, part of a complex that catalyzes the formation of methyl-coenzyme M and tetrahydromethanopterin from coenzyme M and methyl-tetrahydromethanopterin. This is an energy-conserving, sodium-ion translocating step. MtrH catalyzes the transfer of the methyl group from methyl-tetrahydromethanopterin to the corrinoid prosthetic group of MtrA. The sequence is that of Tetrahydromethanopterin S-methyltransferase subunit H from Methanococcus vannielii (strain ATCC 35089 / DSM 1224 / JCM 13029 / OCM 148 / SB).